The primary structure comprises 251 residues: MNAVILIPARLDSSRLPRKMLADLEGEPLIVRTWRQALRSNLASRVVVAADSPEIAAVLEPLGAEVVLTSPTASCGTERIAEAARSIEADVFLNLQGDEPLISPENIDLALQPFFDAPAGSALPDCTTLVFPLGPDDRTQIDDPHVVKVVMDGEGNALYFSRSPIPYVRNSSPSLRLYRHVGLYAFTAEVLQRFAAMPVSMLEEAESLEQLRLLESGFRIRCVNTAVDNPGVNTPEDLELVRSLLRRASRA.

This sequence belongs to the KdsB family.

The protein resides in the cytoplasm. The catalysed reaction is 3-deoxy-alpha-D-manno-oct-2-ulosonate + CTP = CMP-3-deoxy-beta-D-manno-octulosonate + diphosphate. It functions in the pathway nucleotide-sugar biosynthesis; CMP-3-deoxy-D-manno-octulosonate biosynthesis; CMP-3-deoxy-D-manno-octulosonate from 3-deoxy-D-manno-octulosonate and CTP: step 1/1. It participates in bacterial outer membrane biogenesis; lipopolysaccharide biosynthesis. Its function is as follows. Activates KDO (a required 8-carbon sugar) for incorporation into bacterial lipopolysaccharide in Gram-negative bacteria. This is 3-deoxy-manno-octulosonate cytidylyltransferase from Chlorobium luteolum (strain DSM 273 / BCRC 81028 / 2530) (Pelodictyon luteolum).